The primary structure comprises 347 residues: uncharacterized protein (347 aa).

10 helical membrane passes run 15-35 (FVPS…DSLL), 46-66 (VAVG…VPWV), 84-104 (VLSA…ADFI), 111-131 (FWGG…SLIV), 149-169 (GWYI…LIMP), 182-202 (INYF…AVVI), 214-234 (AMAP…VALI), 249-269 (FYIF…MAII), 283-303 (AMSW…SHLV), and 312-332 (IDYI…ITLI).

Belongs to the tellurite-resistance/dicarboxylate transporter (TDT) family.

Its subcellular location is the cell membrane. This is an uncharacterized protein from Methanocaldococcus jannaschii (strain ATCC 43067 / DSM 2661 / JAL-1 / JCM 10045 / NBRC 100440) (Methanococcus jannaschii).